Consider the following 141-residue polypeptide: Thioredoxin-like protein SkfH (141 aa).

Positions 2–141 constitute a Thioredoxin domain; the sequence is KDEQMLTEWP…DKMLKKIAGL (140 aa). Cysteines 41 and 44 form a disulfide.

In terms of biological role, required for production of the bacteriocin SkfA. The sequence is that of Thioredoxin-like protein SkfH from Bacillus subtilis (strain 168).